We begin with the raw amino-acid sequence, 987 residues long: Mediator of RNA polymerase II transcription subunit 24 (987 aa).

Short sequence motifs (LXXLL motif) lie at residues 128–132 (LHWLL), 344–348 (LTPLL), 446–450 (LDLLL), 555–559 (LVALL), 786–790 (LPGLL), and 855–859 (LMRLL). S860 and S871 each carry phosphoserine.

This sequence belongs to the Mediator complex subunit 24 family. In terms of assembly, component of the Mediator complex, which is composed of MED1, MED4, MED6, MED7, MED8, MED9, MED10, MED11, MED12, MED13, MED13L, MED14, MED15, MED16, MED17, MED18, MED19, MED20, MED21, MED22, MED23, MED24, MED25, MED26, MED27, MED29, MED30, MED31, CCNC, CDK8 and CDC2L6/CDK11. The MED12, MED13, CCNC and CDK8 subunits form a distinct module termed the CDK8 module. Mediator containing the CDK8 module is less active than Mediator lacking this module in supporting transcriptional activation. Individual preparations of the Mediator complex lacking one or more distinct subunits have been variously termed ARC, CRSP, DRIP, PC2, SMCC and TRAP. Interacts with AR. Interacts with MED1 and MED10. As to expression, expressed in the adrenal gland, brain, epididymis, heart, kidney, liver, ovary, pancreas, prostate, skeletal muscle, small intestine, spleen, stomach, testis and thymus.

Its subcellular location is the nucleus. In terms of biological role, component of the Mediator complex, a coactivator involved in the regulated transcription of nearly all RNA polymerase II-dependent genes. Mediator functions as a bridge to convey information from gene-specific regulatory proteins to the basal RNA polymerase II transcription machinery. Mediator is recruited to promoters by direct interactions with regulatory proteins and serves as a scaffold for the assembly of a functional preinitiation complex with RNA polymerase II and the general transcription factors. Required for basal and activator-dependent transcription. The polypeptide is Mediator of RNA polymerase II transcription subunit 24 (Med24) (Mus musculus (Mouse)).